The following is a 137-amino-acid chain: Hemoglobin subunit beta (137 aa).

In terms of domain architecture, Globin spans 3–137 (HWTQEERDEI…VIDAISKQYH (135 aa)). Residues histidine 54 and histidine 83 each contribute to the heme b site.

This sequence belongs to the globin family. As to quaternary structure, heterotetramer of two alpha chains and two beta chains. Red blood cells.

In terms of biological role, involved in oxygen transport from gills to the various peripheral tissues. The polypeptide is Hemoglobin subunit beta (HBB) (Mustelus griseus (Spotless smooth-hound)).